A 422-amino-acid polypeptide reads, in one-letter code: Histidine--tRNA ligase (422 aa).

Belongs to the class-II aminoacyl-tRNA synthetase family. Homodimer.

It localises to the cytoplasm. The enzyme catalyses tRNA(His) + L-histidine + ATP = L-histidyl-tRNA(His) + AMP + diphosphate + H(+). This is Histidine--tRNA ligase from Prosthecochloris aestuarii (strain DSM 271 / SK 413).